Consider the following 272-residue polypeptide: MIGKEENKFISFIKKNKFFASRKMGQNFLINENIKKKIVDSLEIKPDDHVLEIGPGFGALTKIVLSQTKNLTVVELDKRLVEFLKQEYKELRIINIDVLKFDFKEFNKDTQYKIISNLPYSISSKIIFKILKYANFSQSVLMVQKEMADRITAKVGTKKYNNFTVLLRITSEIKKLFDVSNNCFFPKPEVDSTVISFERKKDFDFTNFEKLESFLLKCFSQKRKTIFNNLKNYFPKQKIEEVFNKHSIIPTTRPENIKEELYLKMCFDFYDL.

Asparagine 27, leucine 29, glycine 54, glutamate 75, aspartate 97, and asparagine 117 together coordinate S-adenosyl-L-methionine.

It belongs to the class I-like SAM-binding methyltransferase superfamily. rRNA adenine N(6)-methyltransferase family. RsmA subfamily.

It is found in the cytoplasm. The enzyme catalyses adenosine(1518)/adenosine(1519) in 16S rRNA + 4 S-adenosyl-L-methionine = N(6)-dimethyladenosine(1518)/N(6)-dimethyladenosine(1519) in 16S rRNA + 4 S-adenosyl-L-homocysteine + 4 H(+). Functionally, specifically dimethylates two adjacent adenosines (A1518 and A1519) in the loop of a conserved hairpin near the 3'-end of 16S rRNA in the 30S particle. May play a critical role in biogenesis of 30S subunits. The sequence is that of Ribosomal RNA small subunit methyltransferase A from Malacoplasma penetrans (strain HF-2) (Mycoplasma penetrans).